Reading from the N-terminus, the 225-residue chain is Fibronectin type III domain-containing protein 10 (225 aa).

An N-terminal signal peptide occupies residues 1–19 (MRAPPLLLLLAACAPPSGA). Topologically, residues 20–181 (AVDPTPPGWE…FTAEPAAMQE (162 aa)) are extracellular. Residues 72–167 (LASAGGSLRA…ELAAAPPELA (96 aa)) enclose the Fibronectin type-III domain. N-linked (GlcNAc...) asparagine glycosylation is found at N86 and N109. Residues 182–202 (IVVAMTAVGGSICVMLVVICL) traverse the membrane as a helical segment. Residues 203–225 (LVAYITENLMHPTFRRPSLRRQP) are Cytoplasmic-facing.

It localises to the membrane. This is Fibronectin type III domain-containing protein 10 (Fndc10) from Rattus norvegicus (Rat).